The chain runs to 125 residues: Small ribosomal subunit protein uS13 (125 aa).

A disordered region spans residues 90–125; the sequence is QRHRKGLPVRGQRTKTNARTRKGPKRTVAGKKKATK.

It belongs to the universal ribosomal protein uS13 family. In terms of assembly, part of the 30S ribosomal subunit. Forms a loose heterodimer with protein S19. Forms two bridges to the 50S subunit in the 70S ribosome.

In terms of biological role, located at the top of the head of the 30S subunit, it contacts several helices of the 16S rRNA. In the 70S ribosome it contacts the 23S rRNA (bridge B1a) and protein L5 of the 50S subunit (bridge B1b), connecting the 2 subunits; these bridges are implicated in subunit movement. Contacts the tRNAs in the A and P-sites. This chain is Small ribosomal subunit protein uS13, found in Bifidobacterium longum (strain DJO10A).